A 272-amino-acid polypeptide reads, in one-letter code: tRNA pseudouridine synthase A (272 aa).

D52 acts as the Nucleophile in catalysis. Y110 is a binding site for substrate.

This sequence belongs to the tRNA pseudouridine synthase TruA family. As to quaternary structure, homodimer.

It carries out the reaction uridine(38/39/40) in tRNA = pseudouridine(38/39/40) in tRNA. Functionally, formation of pseudouridine at positions 38, 39 and 40 in the anticodon stem and loop of transfer RNAs. This is tRNA pseudouridine synthase A from Cupriavidus taiwanensis (strain DSM 17343 / BCRC 17206 / CCUG 44338 / CIP 107171 / LMG 19424 / R1) (Ralstonia taiwanensis (strain LMG 19424)).